Reading from the N-terminus, the 274-residue chain is Large ribosomal subunit protein uL2 (274 aa).

Residues 197-274 (NSDHALEKSG…SKYIIERRKK (78 aa)) are disordered. Composition is skewed to basic residues over residues 207 to 220 (KAGR…RPHN) and 244 to 274 (PRSR…RRKK).

This sequence belongs to the universal ribosomal protein uL2 family. In terms of assembly, part of the 50S ribosomal subunit. Forms a bridge to the 30S subunit in the 70S ribosome.

Functionally, one of the primary rRNA binding proteins. Required for association of the 30S and 50S subunits to form the 70S ribosome, for tRNA binding and peptide bond formation. It has been suggested to have peptidyltransferase activity; this is somewhat controversial. Makes several contacts with the 16S rRNA in the 70S ribosome. The polypeptide is Large ribosomal subunit protein uL2 (Porphyromonas gingivalis (strain ATCC BAA-308 / W83)).